Reading from the N-terminus, the 144-residue chain is Granulocyte-macrophage colony-stimulating factor (144 aa).

A signal peptide spans 1 to 17; that stretch reads MWLQNLLFLGTVVCSIS. Residue Ser22 is glycosylated (O-linked (GalNAc...) serine). An O-linked (GalNAc...) threonine glycan is attached at Thr27. An N-linked (GlcNAc...) asparagine glycan is attached at Asn44. 2 cysteine pairs are disulfide-bonded: Cys71–Cys113 and Cys105–Cys138.

Belongs to the GM-CSF family. Monomer. The signaling GM-CSF receptor complex is a dodecamer of two head-to-head hexamers of two alpha, two beta, and two ligand subunits.

Its subcellular location is the secreted. In terms of biological role, cytokine that stimulates the growth and differentiation of hematopoietic precursor cells from various lineages, including granulocytes, macrophages, eosinophils and erythrocytes. The polypeptide is Granulocyte-macrophage colony-stimulating factor (CSF2) (Canis lupus familiaris (Dog)).